A 178-amino-acid chain; its full sequence is Glucagon-2 (178 aa).

Positions 1-21 are cleaved as a signal peptide; it reads MFGIHSLAGVLLLVIVQSQLA. Propeptides lie at residues 83 to 87, 123 to 134, and 171 to 178; these read SGAPS, ESAEESMNGPMS, and SNKRQEDH.

Belongs to the glucagon family.

Its subcellular location is the secreted. In terms of biological role, promotes hydrolysis of glycogen and lipids, and raises the blood sugar level. In Oncorhynchus mykiss (Rainbow trout), this protein is Glucagon-2 (gcg2).